Here is a 104-residue protein sequence, read N- to C-terminus: Cytochrome c-552 (104 aa).

The N-terminal stretch at methionine 1–alanine 23 is a signal peptide. Residues cysteine 37, cysteine 40, histidine 41, and methionine 82 each coordinate heme c.

Belongs to the cytochrome c family. As to quaternary structure, monoheme monomer. Has the tendency to dimerize. Binds 1 heme c group covalently per subunit.

Its subcellular location is the periplasm. This chain is Cytochrome c-552 (cycB), found in Bradyrhizobium diazoefficiens (strain JCM 10833 / BCRC 13528 / IAM 13628 / NBRC 14792 / USDA 110).